The sequence spans 633 residues: ATP-dependent clpX-like chaperone, mitochondrial (633 aa).

A mitochondrion-targeting transit peptide spans 1–56 (MSSCGACTCGAAAARLLTTSLTSAQRGISCGRIHVPVLGRLGTLDTQILRRAPLRT). Residues 65–101 (ASKDGTNKDGSGDGNKKSVTEGSSKKSGSGNSGKGGN) are disordered. The span at 69 to 83 (GTNKDGSGDGNKKSV) shows a compositional bias: basic and acidic residues. Residues 84–93 (TEGSSKKSGS) show a composition bias toward low complexity. The 54-residue stretch at 93–146 (SGNSGKGGNQLRCPKCGDLCTHVETFVSSTRFVKCEKCHHFFVVLSEADSKKSI) folds into the ClpX-type ZB domain. Zn(2+) is bound by residues C105, C108, C127, and C130. 294–301 (PTGSGKTL) contacts ATP. Residue K437 is modified to N6-acetyllysine. Basic and acidic residues predominate over residues 598–610 (KEPGYIRAPSKES). The tract at residues 598-633 (KEPGYIRAPSKESSEEDYDSGVEEDGWPRQADAANS) is disordered. Positions 611–622 (SEEDYDSGVEED) are enriched in acidic residues. S617 carries the phosphoserine modification.

The protein belongs to the ClpX chaperone family. In terms of assembly, homohexamer that forms a ring structure; this hexamerization requires ATP binding. Component of the ClpXP complex formed by the assembly of two CLPP heptameric rings with two CLPX hexameric rings, giving rise to a symmetrical structure with two central CLPP rings flanked by a CLPX ring at either end of the complex. Interacts with TFAM.

It is found in the mitochondrion. Its subcellular location is the mitochondrion matrix. It localises to the mitochondrion nucleoid. It catalyses the reaction ATP + H2O = ADP + phosphate + H(+). Functionally, ATP-dependent chaperone that functions as an unfoldase. As part of the ClpXP protease complex, it recognizes specific protein substrates, unfolds them using energy derived from ATP hydrolysis, and then translocates them to the proteolytic subunit (CLPP) of the ClpXP complex for degradation. Thanks to its chaperone activity, it also functions in the incorporation of the pyridoxal phosphate cofactor into 5-aminolevulinate synthase, thereby activating 5-aminolevulinate (ALA) synthesis, the first step in heme biosynthesis. This chaperone is also involved in the control of mtDNA nucleoid distribution, by regulating mitochondrial transcription factor A (TFAM) activity. The sequence is that of ATP-dependent clpX-like chaperone, mitochondrial from Rattus norvegicus (Rat).